Reading from the N-terminus, the 2517-residue chain is Cullin-9 (2517 aa).

Residue Lys87 forms a Glycyl lysine isopeptide (Lys-Gly) (interchain with G-Cter in ubiquitin) linkage. Residues 276–288 (SPELGAGDQSSPC) show a composition bias toward polar residues. A disordered region spans residues 276–296 (SPELGAGDQSSPCATREKSRG). The region spanning 366-439 (RSEFSSRSGY…HWHMLEILGP (74 aa)) is the CPH domain. Residues 576–589 (SNEPSSSSTSRNHS) show a composition bias toward low complexity. The segment at 576–639 (SNEPSSSSTS…TETPMAQSDS (64 aa)) is disordered. The span at 593 to 609 (DPEEESKSEASFSEEET) shows a compositional bias: acidic residues. Residues 610–630 (ESLKAKAEAPKTEAEPTKTRT) show a composition bias toward basic and acidic residues. The residue at position 976 (Ser976) is a Phosphoserine. One can recognise a DOC domain in the interval 1143–1322 (PINIPFFDVF…RTCLFYTIRA (180 aa)). 1363-1370 (AAQALGKT) is an ATP binding site. Disordered regions lie at residues 1432–1466 (VEPPPGPSPEPSTRPFSKNSKGRDRSPAPSPVLPS) and 1664–1685 (DEEEKRLEEEEEEEEEEEAEKE). Pro residues predominate over residues 1433-1443 (EPPPGPSPEPS). Position 1457 is a phosphoserine (Ser1457). Residues 1649–1691 (LFQLQRLDKLFLEQEDEEEKRLEEEEEEEEEEEAEKELFIEDP) adopt a coiled-coil conformation. Over residues 1664-1683 (DEEEKRLEEEEEEEEEEEAE) the composition is skewed to acidic residues. Lys1881 is covalently cross-linked (Glycyl lysine isopeptide (Lys-Gly) (interchain with G-Cter in NEDD8)). Residues 2066–2283 (RPDHCPVCVS…KDYYNCSAMV (218 aa)) form a TRIAD supradomain region. Residues Cys2070, Cys2073, Cys2088, His2090, Cys2093, Cys2096, Cys2115, Cys2120, Cys2160, Cys2166, Cys2181, Cys2184, Cys2189, Cys2192, His2198, Cys2203, Cys2236, and Cys2239 each contribute to the Zn(2+) site. The RING-type 1 zinc-finger motif lies at 2070 to 2120 (CPVCVSPLGCDDDLPSLCCMHYCCKSCWNEYLTTRIEQNLVLNCTCPIADC). Residues 2140–2203 (SKYEKALLRG…FPEAHYPASC (64 aa)) form an IBR-type zinc finger. The RING-type 2; atypical zinc finger occupies 2236-2265 (CPSCQAPIEKNEGCLHMTCAKCNHGFCWRC). The active site involves Cys2249. The Zn(2+) site is built by Cys2254, Cys2257, Cys2262, Cys2265, His2273, and Cys2279. The stretch at 2365–2385 (VEQQTENLELHTNALQILLEE) forms a coiled coil. Residue Ser2436 is modified to Phosphoserine. The segment at 2442–2517 (WEAKGPNMPG…EEEDEDEAYD (76 aa)) is disordered. 2 stretches are compositionally biased toward acidic residues: residues 2461–2499 (EAEEEEEDDEDDVPEWQQDEFDEELDNDSFSYDESENLD) and 2506–2517 (GDEEEDEDEAYD).

The protein belongs to the cullin family. In terms of assembly, component of the Cul9-RING complex consisting of CUL9 and RBX1; the CUL9-RBX1 complex is a heterododecamer composed of six CUL9 and six RBX1 protomers. Interacts (via C-terminal TRIAD/RBR supradomain) with E2 ubiquitin-conjugating enzyme UBE2L3. Interacts with CUL7; the interaction with the CUL7 component of the 3M complex leads to inhibition of CUL9 activity. The CUL7-CUL9 heterodimer seems to interact specifically with TP53, likely via the CPH domain. Forms a complex with p53/TP53 in the cytoplasm of unstressed cells. Interacts with UBCH7 and UBCH8. Post-translationally, autoubiquitinated by the CUL9-RBX1 complex at Lys-87. In terms of processing, neddylated. Neddylation is mediated by E1 enzyme UBA3-NAE1 complex and E2 enzyme UBE2F. Structural rearrangment of the C-terminal TRIAD/RBR supradomain may play a role in neddylation and deneddylation. As to expression, ubiquitously expressed in all tissues with highest expression in testis brain and kidney.

It localises to the cytoplasm. In terms of biological role, core component of a Cul9-RING ubiquitin-protein ligase complex composed of CUL9 and RBX1. The CUL9-RBX1 complex mediates ubiquitination and subsequent degradation of BIRC5 and is required to maintain microtubule dynamics and genome integrity. Acts downstream of the 3M complex, which inhibits the ubiquitination of BIRC5. The CUL9-RBX1 complex also mediates mono-ubiquitination of p53/TP53. Acts as a cytoplasmic anchor protein in p53/TP53-associated protein complex. Regulates the subcellular localization of p53/TP53 and its subsequent function. Ubiquitinates apurinic/apyrimidinic endodeoxyribonuclease APEX2. Ubiquitination by the CUL9-RBX1 complex is predominantly mediated by E2 ubiquitin-conjugating enzymes UBE2L3 and UBE2D2. In Homo sapiens (Human), this protein is Cullin-9 (CUL9).